Here is a 1061-residue protein sequence, read N- to C-terminus: E3 ubiquitin-protein ligase Smurf1 (1061 aa).

The 116-residue stretch at 1 to 116 (MNKLDYPRRN…KGAGFQRLDL (116 aa)) folds into the C2 domain. Disordered regions lie at residues 143–176 (SGNP…WEER) and 188–496 (HATK…SGQR). Positions 167–200 (DSLPEGWEERRTDNGRVYYVNHATKSTQWDRPRQ) constitute a WW 1 domain. Composition is skewed to polar residues over residues 207 to 225 (SHAT…NSGD) and 233 to 255 (TRST…SVTA). At S262 the chain carries Phosphoserine. Residues 264–273 (EILSSVGKEN) are compositionally biased toward polar residues. 2 stretches are compositionally biased toward low complexity: residues 274–300 (TSPT…SAGG) and 311–322 (PATPTSSTTSAS). The span at 348 to 359 (TPTSPTGQQNYV) shows a compositional bias: polar residues. The span at 360-378 (NGNAQNGSTSGNGSGQAAQ) shows a compositional bias: low complexity. Polar residues predominate over residues 379–392 (PQSASNGWTQEDAA). Positions 393 to 409 (TTTSPSTTTSPPRHSQS) are enriched in low complexity. The residue at position 412 (T412) is a Phosphothreonine. Position 416 is a phosphoserine (S416). Residues 417 to 439 (PPASVTPSANGNVHSPNANSTPA) show a composition bias toward polar residues. A compositionally biased stretch (gly residues) spans 480-494 (RNGGTSGGGGGGGSG). WW domains are found at residues 513-546 (LDLP…DPRI) and 561-594 (GPLP…DPRL). The interval 513-602 (LDLPPGYEMR…RLSGSILQMI (90 aa)) is interaction with MAD. 2 stretches are compositionally biased toward low complexity: residues 608–617 (PPTSAANAGT) and 624–656 (TPAT…TNPP). The tract at residues 608-661 (PPTSAANAGTPAPPSATPATPSAAAAVPPQATPASNATPTTLTTTTNPPHRIVP) is disordered. The region spanning 723-1061 (RAKDMRKRLM…VEETCGFAVE (339 aa)) is the HECT domain. Catalysis depends on C1029, which acts as the Glycyl thioester intermediate.

As to quaternary structure, interacts with phosphorylated MAD.

It catalyses the reaction S-ubiquitinyl-[E2 ubiquitin-conjugating enzyme]-L-cysteine + [acceptor protein]-L-lysine = [E2 ubiquitin-conjugating enzyme]-L-cysteine + N(6)-ubiquitinyl-[acceptor protein]-L-lysine.. It participates in protein modification; protein ubiquitination. Its function is as follows. E3 ubiquitin-protein ligase which accepts ubiquitin from an E2 ubiquitin-conjugating enzyme in the form of a thioester and then directly transfers the ubiquitin to targeted substrates. Down-regulates Dpp signaling after gastrulation by promoting MAD ubiquitination and subsequent degradation. This Drosophila melanogaster (Fruit fly) protein is E3 ubiquitin-protein ligase Smurf1.